Here is a 726-residue protein sequence, read N- to C-terminus: MAAAKWLIASLAFASSGLAFTPEDFISAPRRGEAIPDPKGELAVFHVSKYNFDKKDRPSGWNLLNLKNGDISVLTTDSDISEITWLGDGTKIVYVNGTDSVKGGVGIWISDAKNFGNAYKAGSVNGAFSGLKLAKSGDKINFVGYGQSTTKGDLYNEAAAKEAVSSARIYDSLFVRHWDTYVGTQFNAVFSGALTKSGDKYSFDGKLKNLVHPVKYAESPYPPFGGSGDYDLSSDGKTVAFMSKAPELPKANLTTTYIFVVPHDGSRVAEPINKRNGPRTPQGIEGASSSPVFSPDGKRIAYLQMATKNYESDRRVIHIAEVGSNKPVQRIASNWDRSPEVVKWSSDGRTLYVTAEDHATGKLFTLPADARDSHKPAVVKHDGSVSSFYFVGSSKSVLISGNSLWSNALFQVATPGRPNRKLFYANEHDPELKGLGPNDIEPLWVDGARTKIHSWIVKPTGFDKNKVYPLAFLIHGGPQGSWGDSWSTRWNPRVWADQGYVVVAPNPTGSTGFGQKLTDDITNDWGGAPYKDLVKIWEHVRDHIKYIDTDNGIAAGASFGGFMVNWIQGHDLGRKFKALVSHDGTFVGSSKIGTDELFFIEHDFNGTFFEARQNYDRWDCSKPELVAKWSTPQLVIHNDFDFRLSVAEGVGLFNVLQEKGIPSRFLNFPDETHWVTKPENSLVWHQQVLGWINKWSGINKSNPKSIKLSDCPIEVVDHEAHSYFDY.

Positions 1 to 19 (MAAAKWLIASLAFASSGLA) are cleaved as a signal peptide. Residues asparagine 96 and asparagine 252 are each glycosylated (N-linked (GlcNAc...) asparagine). Positions 269–291 (AEPINKRNGPRTPQGIEGASSSP) are disordered. Serine 558 serves as the catalytic Charge relay system. Asparagine 605 carries N-linked (GlcNAc...) asparagine glycosylation. Residues aspartate 641 and histidine 673 each act as charge relay system in the active site. N-linked (GlcNAc...) asparagine glycosylation is present at asparagine 699.

Belongs to the peptidase S9C family.

The protein localises to the secreted. Functionally, extracellular dipeptidyl-peptidase which removes N-terminal dipeptides sequentially from polypeptides having unsubstituted N-termini. Contributes to pathogenicity. The chain is Dipeptidyl-peptidase 5 (DPP5) from Trichophyton tonsurans (Scalp ringworm fungus).